The following is a 96-amino-acid chain: MEPYILQDEELNELVVKIPGWEIKSKQIQREFNFANFNEAFAFMTKVALICEKYNHHPNWENVYAKVIIKLNTHDLGGITNLDQTLASEINKIFDQ.

Belongs to the pterin-4-alpha-carbinolamine dehydratase family.

The catalysed reaction is (4aS,6R)-4a-hydroxy-L-erythro-5,6,7,8-tetrahydrobiopterin = (6R)-L-erythro-6,7-dihydrobiopterin + H2O. This Prochlorococcus marinus (strain MIT 9215) protein is Putative pterin-4-alpha-carbinolamine dehydratase.